The primary structure comprises 371 residues: 4-hydroxy-3-methylbut-2-en-1-yl diphosphate synthase (flavodoxin) (371 aa).

Positions 272, 275, 307, and 314 each coordinate [4Fe-4S] cluster.

Belongs to the IspG family. The cofactor is [4Fe-4S] cluster.

The enzyme catalyses (2E)-4-hydroxy-3-methylbut-2-enyl diphosphate + oxidized [flavodoxin] + H2O + 2 H(+) = 2-C-methyl-D-erythritol 2,4-cyclic diphosphate + reduced [flavodoxin]. The protein operates within isoprenoid biosynthesis; isopentenyl diphosphate biosynthesis via DXP pathway; isopentenyl diphosphate from 1-deoxy-D-xylulose 5-phosphate: step 5/6. In terms of biological role, converts 2C-methyl-D-erythritol 2,4-cyclodiphosphate (ME-2,4cPP) into 1-hydroxy-2-methyl-2-(E)-butenyl 4-diphosphate. The protein is 4-hydroxy-3-methylbut-2-en-1-yl diphosphate synthase (flavodoxin) of Pseudomonas aeruginosa (strain LESB58).